The sequence spans 396 residues: Gap junction gamma-1 protein (396 aa).

Residues 1 to 18 (MSWSFLTRLLEEIHNHST) lie on the Cytoplasmic side of the membrane. Residues 19-39 (FVGKIWLTVLIVFRIVLTAVG) form a helical membrane-spanning segment. Topologically, residues 40 to 75 (GESIYYDEQSKFVCNTEQPGCENVCYDAFAPLSHVR) are extracellular. Residues 76–96 (FWVFQIILVATPSVMYLGYAI) traverse the membrane as a helical segment. Topologically, residues 97 to 175 (HKIAKMEHGE…RRIREDGLMK (79 aa)) are cytoplasmic. Residues 145 to 165 (ELESEKENKEQSQPKPKHDGR) are disordered. A compositionally biased stretch (basic and acidic residues) spans 147-156 (ESEKENKEQS). A helical transmembrane segment spans residues 176-198 (IYVLQLLARTVFEVGFLIGQYFL). Over 199-229 (YGFQVHPFYVCSRLPCPHKIDCFISRPTEKT) the chain is Extracellular. Residues 230–250 (IFLLIMYGVTGLCLLLNIWEM) form a helical membrane-spanning segment. Residues 251 to 396 (LHLGFGTIRD…SGDGKTSVWI (146 aa)) lie on the Cytoplasmic side of the membrane. Residues 303–358 (ELSNAKIAYKQNKANIAQEQQYGSHEEHLPADLETLQREIRMAQERLDLAIQAYHH) adopt a coiled-coil conformation. A disordered region spans residues 357 to 396 (HHQNNPHGPREKKAKVGSKSGSNKSSISSKSGDGKTSVWI). A compositionally biased stretch (low complexity) spans 373–396 (GSKSGSNKSSISSKSGDGKTSVWI).

This sequence belongs to the connexin family. Gamma-type subfamily. As to quaternary structure, a connexon is composed of a hexamer of connexins. Interacts with CNST.

Its subcellular location is the cell membrane. The protein localises to the cell junction. It is found in the gap junction. Functionally, one gap junction consists of a cluster of closely packed pairs of transmembrane channels, the connexons, through which materials of low MW diffuse from one cell to a neighboring cell. This chain is Gap junction gamma-1 protein (GJC1), found in Cricetulus griseus (Chinese hamster).